The chain runs to 380 residues: MATNIRKTHPLFKIINNSLIDLPTPANISIWWNFGSLLGMCLIIQILTGLFLAMHYTADISSAFSSVAHICRDVNYGWLIRNIHANGASMFFICVYLHIARGLYYGSYLNKETWNIGVVILLLLMVTAFVGYVLPWGQMSFWGATVITNLLSALPYIGDTLVQWIWGGFSIDNATLTRFFTFHFLFPFVTAALTMIHLLFLHETGSNNPTGLTSNTDKIPFHPYFTYKDLVGFFILLFLLTLLALFTPNLLNDAENFIPANPLLTPPHIKPEWYFLFAYAILRSIPNKLGGVLALVFSILILLLVPILHTSKQRSLTFRPITQILFWLLVTNTIILTWIGGQPVEQPFITIGQIASITYFSFFLILFPIAGWWENKMLNL.

4 consecutive transmembrane segments (helical) span residues 34–54 (FGSL…FLAM), 78–99 (WLIR…YLHI), 114–134 (WNIG…GYVL), and 179–199 (FFTF…IHLL). Heme b is bound by residues His84 and His98. 2 residues coordinate heme b: His183 and His197. His202 contacts a ubiquinone. Transmembrane regions (helical) follow at residues 227 to 247 (YKDL…ALFT), 289 to 309 (LGGV…PILH), 321 to 341 (ITQI…WIGG), and 348 to 368 (FITI…ILFP).

The protein belongs to the cytochrome b family. In terms of assembly, the cytochrome bc1 complex contains 3 respiratory subunits (MT-CYB, CYC1 and UQCRFS1), 2 core proteins (UQCRC1 and UQCRC2) and probably 6 low-molecular weight proteins. Heme b serves as cofactor.

The protein resides in the mitochondrion inner membrane. Functionally, component of the ubiquinol-cytochrome c reductase complex (complex III or cytochrome b-c1 complex) that is part of the mitochondrial respiratory chain. The b-c1 complex mediates electron transfer from ubiquinol to cytochrome c. Contributes to the generation of a proton gradient across the mitochondrial membrane that is then used for ATP synthesis. The chain is Cytochrome b (mt-cyb) from Hemitrygon laosensis (Mekong freshwater stingray).